Here is a 455-residue protein sequence, read N- to C-terminus: tRNA modification GTPase MnmE (455 aa).

The (6S)-5-formyl-5,6,7,8-tetrahydrofolate site is built by Lys29, Glu91, and Arg131. The TrmE-type G domain maps to 226-378 (GLKVALVGLP…LIQELLKLAG (153 aa)). Asn236 serves as a coordination point for K(+). GTP contacts are provided by residues 236 to 241 (NVGKSS), 255 to 261 (TDLPGTT), 280 to 283 (DTAG), and 341 to 344 (NKAD). Ser240 is a Mg(2+) binding site. Residues Thr255, Leu257, and Thr260 each coordinate K(+). Residue Thr261 coordinates Mg(2+). Lys455 is a binding site for (6S)-5-formyl-5,6,7,8-tetrahydrofolate.

It belongs to the TRAFAC class TrmE-Era-EngA-EngB-Septin-like GTPase superfamily. TrmE GTPase family. In terms of assembly, homodimer. Heterotetramer of two MnmE and two MnmG subunits. It depends on K(+) as a cofactor.

The protein resides in the cytoplasm. In terms of biological role, exhibits a very high intrinsic GTPase hydrolysis rate. Involved in the addition of a carboxymethylaminomethyl (cmnm) group at the wobble position (U34) of certain tRNAs, forming tRNA-cmnm(5)s(2)U34. The protein is tRNA modification GTPase MnmE of Prochlorococcus marinus (strain SARG / CCMP1375 / SS120).